The following is a 355-amino-acid chain: Guanine nucleotide-binding protein G(z) subunit alpha (355 aa).

The segment covering M1–R14 has biased composition (basic and acidic residues). The tract at residues M1–E26 is disordered. G2 is lipidated: N-myristoyl glycine. The S-palmitoyl cysteine moiety is linked to residue C3. In terms of domain architecture, G-alpha spans R32 to C355. Positions K35–T48 are G1 motif. GTP-binding positions include G40 to S47, L176 to T182, D201 to Q205, N270 to D273, and A327. The Mg(2+) site is built by S47 and T182. A G2 motif region spans residues D174–T182. The interval F197–R206 is G3 motif. A G4 motif region spans residues I266 to D273. Positions T325 to T330 are G5 motif.

The protein belongs to the G-alpha family. G(i/o/t/z) subfamily. In terms of assembly, G-proteins are composed of 3 units; alpha, beta and gamma. The alpha chain contains the guanine nucleotide binding site. Interacts with ADGRB2.

Its subcellular location is the membrane. Its function is as follows. Guanine nucleotide-binding proteins (G proteins) are involved as modulators or transducers in various transmembrane signaling systems. This is Guanine nucleotide-binding protein G(z) subunit alpha (Gnaz) from Rattus norvegicus (Rat).